A 160-amino-acid chain; its full sequence is Cytochrome b6-f complex subunit 4 (160 aa).

3 helical membrane passes run 36-56 (LLYIFPVVILGTIACIVGLSV), 95-115 (LLGIALQTLVPLGLMLIPFIE), and 128-148 (IAMAVFLFGTATTIYLGIGAA).

This sequence belongs to the cytochrome b family. PetD subfamily. In terms of assembly, the 4 large subunits of the cytochrome b6-f complex are cytochrome b6, subunit IV (17 kDa polypeptide, PetD), cytochrome f and the Rieske protein, while the 4 small subunits are PetG, PetL, PetM and PetN. The complex functions as a dimer.

The protein localises to the cellular thylakoid membrane. Its function is as follows. Component of the cytochrome b6-f complex, which mediates electron transfer between photosystem II (PSII) and photosystem I (PSI), cyclic electron flow around PSI, and state transitions. The sequence is that of Cytochrome b6-f complex subunit 4 from Synechococcus sp. (strain CC9311).